Reading from the N-terminus, the 298-residue chain is Glycine--tRNA ligase alpha subunit (298 aa).

It belongs to the class-II aminoacyl-tRNA synthetase family. In terms of assembly, tetramer of two alpha and two beta subunits.

It is found in the cytoplasm. It catalyses the reaction tRNA(Gly) + glycine + ATP = glycyl-tRNA(Gly) + AMP + diphosphate. The chain is Glycine--tRNA ligase alpha subunit from Helicobacter pylori (strain P12).